A 1881-amino-acid polypeptide reads, in one-letter code: Nuclear pore membrane glycoprotein 210-like (1881 aa).

A signal peptide spans 1 to 32; sequence MIAFGAPRRRSFGLLFSLAPHLFFLFLIGTLA. N-linked (GlcNAc...) asparagine glycosylation is found at Asn-80, Asn-344, and Asn-808. The 73-residue stretch at 1078–1150 folds into the BIG2 domain; it reads FPPFRLIPEK…TIQTVNEDTG (73 aa). Asn-1441 carries N-linked (GlcNAc...) asparagine glycosylation. A helical transmembrane segment spans residues 1804–1824; sequence YQILLFTLFAVLASTSFIFLA.

It belongs to the NUP210 family. Expressed in testis.

Its subcellular location is the nucleus membrane. The protein resides in the nucleus. It is found in the nucleoplasm. This chain is Nuclear pore membrane glycoprotein 210-like (Nup210l), found in Mus musculus (Mouse).